A 100-amino-acid chain; its full sequence is Large ribosomal subunit protein uL23 (100 aa).

It belongs to the universal ribosomal protein uL23 family. As to quaternary structure, part of the 50S ribosomal subunit. Contacts protein L29, and trigger factor when it is bound to the ribosome.

Functionally, one of the early assembly proteins it binds 23S rRNA. One of the proteins that surrounds the polypeptide exit tunnel on the outside of the ribosome. Forms the main docking site for trigger factor binding to the ribosome. The polypeptide is Large ribosomal subunit protein uL23 (Mycobacterium tuberculosis (strain ATCC 25177 / H37Ra)).